We begin with the raw amino-acid sequence, 201 residues long: FMN-dependent NADH:quinone oxidoreductase (201 aa).

FMN-binding positions include serine 10, serine 16 to serine 18, methionine 96 to phenylalanine 99, and serine 140 to glycine 143.

The protein belongs to the azoreductase type 1 family. As to quaternary structure, homodimer. The cofactor is FMN.

It catalyses the reaction 2 a quinone + NADH + H(+) = 2 a 1,4-benzosemiquinone + NAD(+). It carries out the reaction N,N-dimethyl-1,4-phenylenediamine + anthranilate + 2 NAD(+) = 2-(4-dimethylaminophenyl)diazenylbenzoate + 2 NADH + 2 H(+). Quinone reductase that provides resistance to thiol-specific stress caused by electrophilic quinones. Its function is as follows. Also exhibits azoreductase activity. Catalyzes the reductive cleavage of the azo bond in aromatic azo compounds to the corresponding amines. The polypeptide is FMN-dependent NADH:quinone oxidoreductase (Citrobacter koseri (strain ATCC BAA-895 / CDC 4225-83 / SGSC4696)).